The chain runs to 382 residues: Sphingosine kinase 1 (382 aa).

The DAGKc domain maps to 12–159 (PRPCRVLVLL…MNLLSLHTAS (148 aa)). Residues 22 to 24 (NPQ) and 54 to 58 (TERKN) each bind ATP. Residue 79-82 (SGDG) coordinates substrate. D81 functions as the Proton donor/acceptor in the catalytic mechanism. Residues E86 and 111 to 113 (GSG) contribute to the ATP site. Short sequence motifs (nuclear export signal) lie at residues 147 to 155 (LSPMNLLSL) and 161 to 169 (LRLYSVLSL). D178 is a substrate binding site. 2 residues coordinate ATP: R185 and R191. T193 is modified (phosphothreonine). Phosphoserine is present on S225. 340–342 (DGE) serves as a coordination point for ATP.

In terms of assembly, interacts with ACY1. Binds to calmodulin. Interacts with SPHKAP. Interacts with CIB1, the interaction occurs in a calcium-dependent manner. Interacts with TRAF2. Interacts with EEF1A1; the interaction enhances SPHK1 kinase activity. Requires Mg(2+) as cofactor. In terms of tissue distribution, widely expressed. Expressed in brain (at protein level). Detected in neurons.

It localises to the cytoplasm. Its subcellular location is the endosome membrane. The protein resides in the nucleus. The protein localises to the cell membrane. It is found in the synapse. It catalyses the reaction a sphingoid base + ATP = a sphingoid 1-phosphate + ADP + H(+). The enzyme catalyses L-seryl-[protein] + acetyl-CoA = O-acetyl-L-seryl-[protein] + CoA. The catalysed reaction is sphinganine + ATP = sphinganine 1-phosphate + ADP + H(+). It carries out the reaction sphing-4-enine + ATP = sphing-4-enine 1-phosphate + ADP + H(+). It catalyses the reaction 1-O-hexadecyl-2-amino-sn-glycerol + ATP = 1-O-hexadecyl-2-desoxy-2-amino-sn-glycero-3-phosphate + ADP + H(+). With respect to regulation, acetyltransferase activity increases in presence of the kinase substrate, sphingosine. In Purkinje cells, kinase activity on sphingosine increases in presence of VEGFA. In neurons, kinase activity increases during the first 24h in presence of Amyloid-beta protein 42 to decrease after 96h. Catalyzes the phosphorylation of sphingosine to form sphingosine 1-phosphate (SPP), a lipid mediator with both intra- and extracellular functions. Also acts on D-erythro-sphingosine and to a lesser extent sphinganine, but not other lipids, such as D,L-threo-dihydrosphingosine, N,N-dimethylsphingosine, diacylglycerol, ceramide, or phosphatidylinositol. In contrast to proapoptotic SPHK2, has a negative effect on intracellular ceramide levels, enhances cell growth and inhibits apoptosis. Involved in the regulation of inflammatory response and neuroinflammation. Via the product sphingosine 1-phosphate, stimulates TRAF2 E3 ubiquitin ligase activity, and promotes activation of NF-kappa-B in response to TNF signaling. In response to TNF and in parallel to NF-kappa-B activation, negatively regulates RANTES induction through p38 MAPK signaling pathway. Involved in endocytic membrane trafficking induced by sphingosine, recruited to dilate endosomes, also plays a role on later stages of endosomal maturation and membrane fusion independently of its kinase activity. In Purkinje cells, seems to be also involved in the regulation of autophagosome-lysosome fusion upon VEGFA. Functionally, has serine acetyltransferase activity on PTGS2/COX2 in an acetyl-CoA dependent manner. The acetyltransferase activity increases in presence of the kinase substrate, sphingosine. During neuroinflammation, through PTGS2 acetylation, promotes neuronal secretion of specialized preresolving mediators (SPMs), especially 15-R-lipoxin A4, which results in an increase of phagocytic microglia. This chain is Sphingosine kinase 1, found in Mus musculus (Mouse).